The primary structure comprises 349 residues: Flap endonuclease 1 (349 aa).

The segment at 1 to 98 (MDLADLVKDV…EELERRRKAK (98 aa)) is N-domain. Residues Asp27, Asp80, Glu152, Glu154, Asp173, Asp175, and Asp236 each contribute to the Mg(2+) site. The tract at residues 116-258 (ELRKYSQAIL…RALKIIKKYG (143 aa)) is I-domain. The interaction with PCNA stretch occupies residues 341 to 349 (RQTGLDRWF).

Belongs to the XPG/RAD2 endonuclease family. FEN1 subfamily. As to quaternary structure, interacts with PCNA via subunit PCNA1. Mg(2+) serves as cofactor.

Heterotrimeric PCNA stimulates the nuclease activity without altering cleavage specificity. Its function is as follows. Structure-specific nuclease with 5'-flap endonuclease and 5'-3' exonuclease activities involved in DNA replication and repair. During DNA replication, cleaves the 5'-overhanging flap structure that is generated by displacement synthesis when DNA polymerase encounters the 5'-end of a downstream Okazaki fragment. Binds the unpaired 3'-DNA end and kinks the DNA to facilitate 5' cleavage specificity. Cleaves one nucleotide into the double-stranded DNA from the junction in flap DNA, leaving a nick for ligation. Also involved in the base excision repair (BER) pathway. Acts as a genome stabilization factor that prevents flaps from equilibrating into structures that lead to duplications and deletions. Also possesses 5'-3' exonuclease activity on nicked or gapped double-stranded DNA. DNA polymerase I, DNA ligase and the flap endonuclease may be constitutively associated with the PCNA heterotrimer forming a scanning complex able to couple DNA synthesis and Okazaki fragment maturation. The protein is Flap endonuclease 1 of Saccharolobus solfataricus (strain ATCC 35092 / DSM 1617 / JCM 11322 / P2) (Sulfolobus solfataricus).